The sequence spans 465 residues: AYNALAPKGAPNSCEWEQNETAQVDAQELDEEENEANEAQAREQEQAKKTHVYAQAPLSGIKITKEGLQIGTADATVAGAGKEIFADKTFQPEPQVGESQWNEADATAAGGRVLKKTTPMKPCYGSYARPTNSNGGQGVLWLTNGKLESQVEMQFFSTSTNATNEVNNIQPTVVLYSEDVNMETPDTHLSYKPKMGDKNAKVSLGQQAMPNRPNYIAFRDNFIGLMYYNSTGNMGVLAGQASQLNAVVDLQDRNTELSYQLLLDSIGDRTRYFSMWNQAVDSYDPDVRIIENHGTEDELPNYCFPLGGIGITDTFQAVKTTAANGDQGNTTWQKDSTFAERNEIGVGNNFAMEINLNANLWRNFLYSNIALYLPDKLKYNPTNVDISDNPNTYDHMKRVVAPGLVDCYINLGARWSLDYMDNVNPFNHHRNAGLRYRSMLLGNGRYVPFHIQVPQKFFAIKNLLL.

The disordered stretch occupies residues 1–51 (AYNALAPKGAPNSCEWEQNETAQVDAQELDEEENEANEAQAREQEQAKKTH). The segment covering 15 to 24 (EWEQNETAQV) has biased composition (polar residues). The span at 27–36 (QELDEEENEA) shows a compositional bias: acidic residues.

It belongs to the adenoviridae hexon protein family. In terms of assembly, homotrimer. Interacts with the capsid vertex protein; this interaction binds the peripentonal hexons to the neighboring penton base. Interacts with the hexon-linking protein; this interaction tethers the hexons surrounding the penton to those situated in the central plate of the facet. Interacts with the hexon-interlacing protein; this interaction lashes the hexons together. Interacts with host dyneins DYNC1LI1 and DYNC1I2; this interaction might be involved in intracellular microtubule-dependent transport of incoming viral capsid. Interacts with the shutoff protein; this interaction allows folding and formation of hexons trimers. Interacts with pre-protein VI; this interaction probably allows nuclear import of hexon trimers and possibly pre-capsid assembly.

The protein resides in the virion. Its subcellular location is the host nucleus. Its function is as follows. Major capsid protein that self-associates to form 240 hexon trimers, each in the shape of a hexagon, building most of the pseudo T=25 capsid. Assembled into trimeric units with the help of the chaperone shutoff protein. Transported by pre-protein VI to the nucleus where it associates with other structural proteins to form an empty capsid. Might be involved, through its interaction with host dyneins, in the intracellular microtubule-dependent transport of incoming viral capsid to the nucleus. The sequence is that of Hexon protein from Homo sapiens (Human).